The following is a 166-amino-acid chain: Phosphodiesterase MJ0936 (166 aa).

Positions 8, 10, 36, 59, 97, 120, and 122 each coordinate Mn(2+). Ni(2+)-binding residues include D8, H10, D36, N59, H97, H120, and H122.

The protein belongs to the metallophosphoesterase superfamily. YfcE family. In terms of assembly, monomer. Ni(2+) is required as a cofactor. It depends on Mn(2+) as a cofactor.

Its activity is regulated as follows. Competitively inhibited by phosphate. Its function is as follows. Shows phosphodiesterase activity. Hydrolyzes phosphodiesters bonds in the artificial chromogenic substrates bis-p-nitrophenyl phosphate (bis-pNPP), and less efficiently thymidine 5'-monophosphate p-nitrophenyl ester (pNP-TMP) and p-nitrophenylphosphorylcholine (pNPPC). No catalytic activity was found toward cAMP or cGMP, nucleotides or phospholipase substrates such as phosphatidylcholine. The physiological substrate is unknown. The protein is Phosphodiesterase MJ0936 of Methanocaldococcus jannaschii (strain ATCC 43067 / DSM 2661 / JAL-1 / JCM 10045 / NBRC 100440) (Methanococcus jannaschii).